We begin with the raw amino-acid sequence, 234 residues long: UPF0758 protein STH371 (234 aa).

The MPN domain occupies Asp110–Leu232. Residues His181, His183, and Asp194 each coordinate Zn(2+). Residues His181–Asp194 carry the JAMM motif motif.

This sequence belongs to the UPF0758 family.

This chain is UPF0758 protein STH371, found in Symbiobacterium thermophilum (strain DSM 24528 / JCM 14929 / IAM 14863 / T).